Consider the following 100-residue polypeptide: UPF0213 protein YhbQ (100 aa).

Positions 2–77 (TPWYLYLIRT…KQLTKRQKER (76 aa)) constitute a GIY-YIG domain.

This sequence belongs to the UPF0213 family.

The chain is UPF0213 protein YhbQ from Salmonella choleraesuis (strain SC-B67).